We begin with the raw amino-acid sequence, 119 residues long: C-C motif chemokine 24 (119 aa).

The N-terminal stretch at 1–26 is a signal peptide; it reads MAGLMTIVTSLLFLGVCAHHIIPTGS. Intrachain disulfides connect Cys-33-Cys-58 and Cys-34-Cys-74. A glycan (N-linked (GlcNAc...) asparagine) is linked at Asn-115.

The protein belongs to the intercrine beta (chemokine CC) family. N-glycosylated. As to expression, activated monocytes and activated T lymphocytes.

Its subcellular location is the secreted. In terms of biological role, chemotactic for resting T-lymphocytes, and eosinophils. Has lower chemotactic activity for neutrophils but none for monocytes and activated lymphocytes. Is a strong suppressor of colony formation by a multipotential hematopoietic progenitor cell line. Binds to CCR3. The sequence is that of C-C motif chemokine 24 from Homo sapiens (Human).